A 457-amino-acid polypeptide reads, in one-letter code: ATP synthase subunit beta (457 aa).

147 to 154 (GGAGVGKT) contacts ATP.

This sequence belongs to the ATPase alpha/beta chains family. F-type ATPases have 2 components, CF(1) - the catalytic core - and CF(0) - the membrane proton channel. CF(1) has five subunits: alpha(3), beta(3), gamma(1), delta(1), epsilon(1). CF(0) has three main subunits: a(1), b(2) and c(9-12). The alpha and beta chains form an alternating ring which encloses part of the gamma chain. CF(1) is attached to CF(0) by a central stalk formed by the gamma and epsilon chains, while a peripheral stalk is formed by the delta and b chains.

It is found in the cell inner membrane. It carries out the reaction ATP + H2O + 4 H(+)(in) = ADP + phosphate + 5 H(+)(out). In terms of biological role, produces ATP from ADP in the presence of a proton gradient across the membrane. The catalytic sites are hosted primarily by the beta subunits. The chain is ATP synthase subunit beta from Haemophilus influenzae (strain PittGG).